A 475-amino-acid chain; its full sequence is MAGKTLYDKLWEMHEVKRRDDGSSLIYIDRHILHEVTSPQAFEGLRLANRKPWRIDANIATPDHNVPTTKGERQGGLEAIADEVSRIQVQTLDENCDDFGILEFKMNDVRQGIVHVIGPEQGATLPGMTVVCGDSHTSTHGAFGALAHGIGTSEVEHVLATQCLVAKKMKNMQVRVEGKLPFGVTAKDIVLAVIGKIGTAGGNGHALEFAGSAIRDLSMEGRMTICNMAIEAGARVGMVAVDEKTIAYVEGRPYAPKGADWDKAVKLWQDLVSDDDAVFDTIVELKAEDIKPQVSWGTSPEMVLAVDQNVPDPAVEADPVKKDSITRALKYMGLQANQAITDIRLDRVFIGSCTNSRIEDLRAAAEVAKGRKVAANVKQALVVPGSGLVKQQAEAEGLDKIFIEAGFEWREPGCSMCLAMNPDKLGSGEHCASTSNRNFEGRQGAGGRTHLVSPAMAAAAAVTGHFIDVRELIQA.

Residues C353, C414, and C417 each coordinate [4Fe-4S] cluster.

It belongs to the aconitase/IPM isomerase family. LeuC type 1 subfamily. As to quaternary structure, heterodimer of LeuC and LeuD. [4Fe-4S] cluster is required as a cofactor.

It carries out the reaction (2R,3S)-3-isopropylmalate = (2S)-2-isopropylmalate. The protein operates within amino-acid biosynthesis; L-leucine biosynthesis; L-leucine from 3-methyl-2-oxobutanoate: step 2/4. Catalyzes the isomerization between 2-isopropylmalate and 3-isopropylmalate, via the formation of 2-isopropylmaleate. This chain is 3-isopropylmalate dehydratase large subunit, found in Stutzerimonas stutzeri (strain A1501) (Pseudomonas stutzeri).